A 526-amino-acid polypeptide reads, in one-letter code: Probable Xaa-Pro aminopeptidase MGG_05684 (526 aa).

Mn(2+) contacts are provided by Asp-285, Asp-296, Glu-447, and Glu-488.

The protein belongs to the peptidase M24B family. Mn(2+) is required as a cofactor.

It carries out the reaction Release of any N-terminal amino acid, including proline, that is linked to proline, even from a dipeptide or tripeptide.. Catalyzes the removal of a penultimate prolyl residue from the N-termini of peptides. This Pyricularia oryzae (strain 70-15 / ATCC MYA-4617 / FGSC 8958) (Rice blast fungus) protein is Probable Xaa-Pro aminopeptidase MGG_05684.